Consider the following 90-residue polypeptide: Large ribosomal subunit protein bL27 (90 aa).

The disordered stretch occupies residues 1 to 20 (MAHKKAGGSSRNGRDSAGKR).

Belongs to the bacterial ribosomal protein bL27 family.

The protein is Large ribosomal subunit protein bL27 of Rhodopseudomonas palustris (strain ATCC BAA-98 / CGA009).